A 293-amino-acid polypeptide reads, in one-letter code: 4-hydroxy-tetrahydrodipicolinate synthase (293 aa).

T47 serves as a coordination point for pyruvate. Y136 acts as the Proton donor/acceptor in catalysis. The Schiff-base intermediate with substrate role is filled by K164. I206 serves as a coordination point for pyruvate.

Belongs to the DapA family. As to quaternary structure, homotetramer; dimer of dimers.

Its subcellular location is the cytoplasm. The catalysed reaction is L-aspartate 4-semialdehyde + pyruvate = (2S,4S)-4-hydroxy-2,3,4,5-tetrahydrodipicolinate + H2O + H(+). Its pathway is amino-acid biosynthesis; L-lysine biosynthesis via DAP pathway; (S)-tetrahydrodipicolinate from L-aspartate: step 3/4. Functionally, catalyzes the condensation of (S)-aspartate-beta-semialdehyde [(S)-ASA] and pyruvate to 4-hydroxy-tetrahydrodipicolinate (HTPA). In Listeria innocua serovar 6a (strain ATCC BAA-680 / CLIP 11262), this protein is 4-hydroxy-tetrahydrodipicolinate synthase.